The sequence spans 257 residues: uncharacterized protein (257 aa).

A helical transmembrane segment spans residues isoleucine 6 to phenylalanine 26.

The protein belongs to the staphylococcal tandem lipoprotein family.

The protein localises to the cell membrane. This is an uncharacterized protein from Staphylococcus aureus (strain COL).